A 135-amino-acid polypeptide reads, in one-letter code: Early E3 15.3 kDa protein (135 aa).

This sequence belongs to the adenoviridae E3_15 family.

Protects virus-infected cells from TNF-induced cytolysis. This is Early E3 15.3 kDa protein from Human adenovirus B serotype 7 (HAdV-7).